The chain runs to 695 residues: MENVEARYVDLDKLRNIGIMAHIDAGKTTTTERILYYTGRKHFLGDVDEGNTTTDWMPQEKERGITIQSAATTCFWKGYRINIIDTPGHVDFTAEVERALRVLDGAIAVFDATAGVEPQSETVWRQADKYNVPRIAFMNKMDKVGADFYMAVETLVTKLKANPIPVQMPIGSEKDFQGVIDLIKMKAIYWVSEDGSVYEEREIPEELREEAEMRREEMLEKVAELDEEILEKYLEGEEISEEEIKRILRKATIENRAVPVLCGAAKANKGIQPLLDAVIDYLPSPLDLPPVKGWRVSDGEIVYRKPDENEPFTALVFKVQVDPYIGKLVYFRVYSGRLEKGSYVYNSTKGQRERISRIVFMHADKREEVDYVRPGDIAAGVGLKVSQTGDTLCDEKEPVILEKIDFPEPVISLAIEPATKADEEKLVKALLALSEEDPTLQVRVDKETGETIISGMGELHLEIVVDRLKREFGVNVRVGQPQVAYRETIKRPAEAEGKYIRQTGGRGQYGHVILRIEPIPEEEGKNFEFIDKTVGGVIPKEFMPAIEAGIKEAMMSGPLAGYPVVRVRAVVLDGSYHEVDSSEMAFKIAASMAFKEAMKKAQPVLLEPIMKLEITTPEEYMGNIISDLNSRRAKIESLETRGHLKIVVAKIPLSETFGYATVLRSLSQGRASYIMQFSHYQEVPEKIAEKIIKVV.

The 275-residue stretch at 12–286 folds into the tr-type G domain; that stretch reads DKLRNIGIMA…AVIDYLPSPL (275 aa). Residues 21-28, 85-89, and 139-142 each bind GTP; these read AHIDAGKT, DTPGH, and NKMD.

This sequence belongs to the TRAFAC class translation factor GTPase superfamily. Classic translation factor GTPase family. EF-G/EF-2 subfamily.

The protein localises to the cytoplasm. In terms of biological role, catalyzes the GTP-dependent ribosomal translocation step during translation elongation. During this step, the ribosome changes from the pre-translocational (PRE) to the post-translocational (POST) state as the newly formed A-site-bound peptidyl-tRNA and P-site-bound deacylated tRNA move to the P and E sites, respectively. Catalyzes the coordinated movement of the two tRNA molecules, the mRNA and conformational changes in the ribosome. In Thermotoga petrophila (strain ATCC BAA-488 / DSM 13995 / JCM 10881 / RKU-1), this protein is Elongation factor G.